Reading from the N-terminus, the 149-residue chain is Nucleoside diphosphate kinase (149 aa).

The ATP site is built by K9, F57, R85, T91, R102, and N112. H115 acts as the Pros-phosphohistidine intermediate in catalysis.

This sequence belongs to the NDK family. Homotetramer. The cofactor is Mg(2+).

It is found in the cytoplasm. The enzyme catalyses a 2'-deoxyribonucleoside 5'-diphosphate + ATP = a 2'-deoxyribonucleoside 5'-triphosphate + ADP. The catalysed reaction is a ribonucleoside 5'-diphosphate + ATP = a ribonucleoside 5'-triphosphate + ADP. Functionally, major role in the synthesis of nucleoside triphosphates other than ATP. The ATP gamma phosphate is transferred to the NDP beta phosphate via a ping-pong mechanism, using a phosphorylated active-site intermediate. This is Nucleoside diphosphate kinase from Acaryochloris marina (strain MBIC 11017).